A 497-amino-acid chain; its full sequence is Probable cytosol aminopeptidase (497 aa).

Mn(2+) is bound by residues lysine 265 and aspartate 270. Lysine 277 is an active-site residue. Mn(2+) is bound by residues aspartate 288, aspartate 347, and glutamate 349. Arginine 351 is an active-site residue.

Belongs to the peptidase M17 family. It depends on Mn(2+) as a cofactor.

It localises to the cytoplasm. It catalyses the reaction Release of an N-terminal amino acid, Xaa-|-Yaa-, in which Xaa is preferably Leu, but may be other amino acids including Pro although not Arg or Lys, and Yaa may be Pro. Amino acid amides and methyl esters are also readily hydrolyzed, but rates on arylamides are exceedingly low.. The enzyme catalyses Release of an N-terminal amino acid, preferentially leucine, but not glutamic or aspartic acids.. In terms of biological role, presumably involved in the processing and regular turnover of intracellular proteins. Catalyzes the removal of unsubstituted N-terminal amino acids from various peptides. The protein is Probable cytosol aminopeptidase of Geobacillus thermodenitrificans (strain NG80-2).